A 221-amino-acid polypeptide reads, in one-letter code: Translation initiation factor 6 (221 aa).

It belongs to the eIF-6 family.

In terms of biological role, binds to the 50S ribosomal subunit and prevents its association with the 30S ribosomal subunit to form the 70S initiation complex. In Methanosphaerula palustris (strain ATCC BAA-1556 / DSM 19958 / E1-9c), this protein is Translation initiation factor 6.